Here is a 274-residue protein sequence, read N- to C-terminus: Formamidopyrimidine-DNA glycosylase (274 aa).

Pro2 acts as the Schiff-base intermediate with DNA in catalysis. Catalysis depends on Glu3, which acts as the Proton donor. The Proton donor; for beta-elimination activity role is filled by Lys58. DNA contacts are provided by His91 and Arg110. Residues 238-272 form an FPG-type zinc finger; it reads QVYDKTGQECVRCGTIIEKIQLGGRGTHFCPNCQR. The active-site Proton donor; for delta-elimination activity is Arg262.

The protein belongs to the FPG family. As to quaternary structure, monomer. The cofactor is Zn(2+).

It catalyses the reaction Hydrolysis of DNA containing ring-opened 7-methylguanine residues, releasing 2,6-diamino-4-hydroxy-5-(N-methyl)formamidopyrimidine.. The enzyme catalyses 2'-deoxyribonucleotide-(2'-deoxyribose 5'-phosphate)-2'-deoxyribonucleotide-DNA = a 3'-end 2'-deoxyribonucleotide-(2,3-dehydro-2,3-deoxyribose 5'-phosphate)-DNA + a 5'-end 5'-phospho-2'-deoxyribonucleoside-DNA + H(+). Functionally, involved in base excision repair of DNA damaged by oxidation or by mutagenic agents. Acts as a DNA glycosylase that recognizes and removes damaged bases. Has a preference for oxidized purines, such as 7,8-dihydro-8-oxoguanine (8-oxoG). Has AP (apurinic/apyrimidinic) lyase activity and introduces nicks in the DNA strand. Cleaves the DNA backbone by beta-delta elimination to generate a single-strand break at the site of the removed base with both 3'- and 5'-phosphates. This Streptococcus pneumoniae serotype 4 (strain ATCC BAA-334 / TIGR4) protein is Formamidopyrimidine-DNA glycosylase.